The sequence spans 251 residues: Pyridoxine 5'-phosphate synthase (251 aa).

3-amino-2-oxopropyl phosphate-binding residues include asparagine 8 and arginine 19. Catalysis depends on histidine 44, which acts as the Proton acceptor. 1-deoxy-D-xylulose 5-phosphate contacts are provided by arginine 46 and histidine 51. The active-site Proton acceptor is glutamate 76. Threonine 106 is a binding site for 1-deoxy-D-xylulose 5-phosphate. Residue histidine 200 is the Proton donor of the active site. 3-amino-2-oxopropyl phosphate-binding positions include aspartate 201 and 223–224 (GH).

The protein belongs to the PNP synthase family. As to quaternary structure, homooctamer; tetramer of dimers.

The protein resides in the cytoplasm. The enzyme catalyses 3-amino-2-oxopropyl phosphate + 1-deoxy-D-xylulose 5-phosphate = pyridoxine 5'-phosphate + phosphate + 2 H2O + H(+). Its pathway is cofactor biosynthesis; pyridoxine 5'-phosphate biosynthesis; pyridoxine 5'-phosphate from D-erythrose 4-phosphate: step 5/5. Catalyzes the complicated ring closure reaction between the two acyclic compounds 1-deoxy-D-xylulose-5-phosphate (DXP) and 3-amino-2-oxopropyl phosphate (1-amino-acetone-3-phosphate or AAP) to form pyridoxine 5'-phosphate (PNP) and inorganic phosphate. The sequence is that of Pyridoxine 5'-phosphate synthase from Agrobacterium fabrum (strain C58 / ATCC 33970) (Agrobacterium tumefaciens (strain C58)).